The sequence spans 781 residues: MAEPLKEDDGEDGSGEPPGPVKAEPAGTAASVAAKNLALLKARSFDVTFDVGDEYEIIETIGNGAYGVVSSARRRLTGQQVAIKKIPNAFDVVTNAKRTLRELKILKHFKHDNIIAIKDILRPTVPYGEFKSVYVVLDLMESDLHQIIHSSQPLTLEHVRYFLYQLLRGLKYMHSAQVIHRDLKPSNLLVNENCELKIGDFGMARGLCTSPAEHQYFMTEYVATRWYRAPELMLSLHEYTQAIDLWSVGCIFGEMLARRQLFPGKNYVHQLQLIMTVLGTPSPAVIQAVGAERVRAYIQSLPPRQPVPWETVYPGADRQALSLLGRMLRFEPSARVSAAAALRHPFLAKYHDPDDEPDCAPPFDFAFDREALTRERIKEAIVAEIEDFHARREGIRQQIRFQPSLQPVASEPGCPDVEMPSPWAPSGDCAMESPPPAPLPCPGPAPDTIDLTLQPPPPASEPAPPKKEGAISDNTKAALKAALLKSLRSRLRDGPSAPLEAPEPRKPVTAQERQREREEKRRRRQERAKEREKRRQERERKERGAGVSGGPSADPLAGLVLSDNDRSLLERWTRMAQPPAPAPATARPPSPPAGPATQPTGPLPQPACPPPAPAAGPAAPQTTAASGLLAPQPLVPPPGLPGPSALSVLPYFPSGPPPPDPGGAPQPSTSESPDVTLVTQQLSKSQVEDPLPPVFSGTPKGSGAGYGVGFDLEEFLNQSFDMGVADGPQDGQADSASLSASLLADWLEGHGMNPADIESLQREIQMDSPMLLADLPDLQEP.

The interval 1-27 (MAEPLKEDDGEDGSGEPPGPVKAEPAG) is disordered. The residue at position 2 (Ala-2) is an N-acetylalanine. Residues 2 to 77 (AEPLKEDDGE…VVSSARRRLT (76 aa)) are required for cytoplasmic targeting. Residues 55-347 (YEIIETIGNG…AAAALRHPFL (293 aa)) form the Protein kinase domain. Residues 61 to 69 (IGNGAYGVV) and Lys-84 each bind ATP. Residues 78–139 (GQQVAIKKIP…FKSVYVVLDL (62 aa)) are required for binding to MAP2K5. Residues 140-406 (MESDLHQIIH…QQIRFQPSLQ (267 aa)) are necessary for oligomerization. Asp-182 functions as the Proton acceptor in the catalytic mechanism. Positions 219–221 (TEY) match the TXY motif. The tract at residues 402-708 (QPSLQPVASE…PKGSGAGYGV (307 aa)) is disordered. Residues 407 to 781 (PVASEPGCPD…LADLPDLQEP (375 aa)) are may not be required for kinase activity; required to stimulate MEF2C activity. Pro residues-rich tracts occupy residues 433-445 (SPPPAPLPCPGPA) and 454-463 (QPPPPASEPA). The span at 476 to 486 (KAALKAALLKS) shows a compositional bias: low complexity. Basic and acidic residues-rich tracts occupy residues 502-519 (PEPRKPVTAQERQREREE), 527-544 (RAKEREKRRQERERKERG), and 563-573 (DNDRSLLERWT). The Nuclear localization signal motif lies at 505-539 (RKPVTAQERQREREEKRRRRQERAKEREKRRQERE). Pro residues-rich tracts occupy residues 578 to 594 (PPAPAPATARPPSPPAG) and 601 to 614 (GPLPQPACPPPAPA). Composition is skewed to low complexity over residues 615 to 632 (AGPAAPQTTAASGLLAPQ) and 642 to 652 (GPSALSVLPYF). A compositionally biased stretch (pro residues) spans 653–664 (PSGPPPPDPGGA). Polar residues predominate over residues 668–685 (STSESPDVTLVTQQLSKS). At Ser-685 the chain carries Phosphoserine. At Thr-698 the chain carries Phosphothreonine.

Belongs to the protein kinase superfamily. CMGC Ser/Thr protein kinase family. MAP kinase subfamily. As to quaternary structure, interacts with MAP2K5. Forms oligomers. Interacts with MEF2A, MEF2C and MEF2D; the interaction phosphorylates the MEF2s and enhances transcriptional activity of MEF2A, MEF2C but not MEF2D. Interacts with SGK1. Interacts with PML. Interacts (via N-terminal half) with HSP90AB1-CDC37 chaperone complex in resting cells; the interaction is MAP2K5-independent and prevents MAPK7 from ubiquitination and proteasomal degradation. Interacts with STUB1/CHIP; the interaction is enhanced in the presence of IGF1 or MAP2K5 and promotes STUB1/CHIP E3 ligase activity. It depends on Mg(2+) as a cofactor. In terms of processing, dually phosphorylated on Thr-219 and Tyr-221, which activates the enzyme.

The protein localises to the cytoplasm. The protein resides in the nucleus. It is found in the PML body. It carries out the reaction L-seryl-[protein] + ATP = O-phospho-L-seryl-[protein] + ADP + H(+). The catalysed reaction is L-threonyl-[protein] + ATP = O-phospho-L-threonyl-[protein] + ADP + H(+). Activated by tyrosine and threonine phosphorylation. Activated in response to hyperosmolarity, hydrogen peroxide, and epidermal growth factor (EGF). Plays a role in various cellular processes such as proliferation, differentiation and cell survival. The upstream activator of MAPK7 is the MAPK kinase MAP2K5. Upon activation, it translocates to the nucleus and phosphorylates various downstream targets including MEF2C. EGF activates MAPK7 through a Ras-independent and MAP2K5-dependent pathway. As part of the MAPK/ERK signaling pathway, acts as a negative regulator of apoptosis in cardiomyocytes via interaction with STUB1/CHIP and promotion of STUB1-mediated ubiquitination and degradation of ICER-type isoforms of CREM. May have a role in muscle cell differentiation. May be important for endothelial function and maintenance of blood vessel integrity. MAP2K5 and MAPK7 interact specifically with one another and not with MEK1/ERK1 or MEK2/ERK2 pathways. Phosphorylates SGK1 at Ser-78 and this is required for growth factor-induced cell cycle progression. Involved in the regulation of p53/TP53 by disrupting the PML-MDM2 interaction. The chain is Mitogen-activated protein kinase 7 (MAPK7) from Bos taurus (Bovine).